We begin with the raw amino-acid sequence, 159 residues long: ATP synthase subunit b 2 (159 aa).

Residues 1-21 traverse the membrane as a helical segment; it reads MDATFWAFIALVIFVAIVVYM.

This sequence belongs to the ATPase B chain family. F-type ATPases have 2 components, F(1) - the catalytic core - and F(0) - the membrane proton channel. F(1) has five subunits: alpha(3), beta(3), gamma(1), delta(1), epsilon(1). F(0) has three main subunits: a(1), b(2) and c(10-14). The alpha and beta chains form an alternating ring which encloses part of the gamma chain. F(1) is attached to F(0) by a central stalk formed by the gamma and epsilon chains, while a peripheral stalk is formed by the delta and b chains.

It localises to the cell inner membrane. In terms of biological role, f(1)F(0) ATP synthase produces ATP from ADP in the presence of a proton or sodium gradient. F-type ATPases consist of two structural domains, F(1) containing the extramembraneous catalytic core and F(0) containing the membrane proton channel, linked together by a central stalk and a peripheral stalk. During catalysis, ATP synthesis in the catalytic domain of F(1) is coupled via a rotary mechanism of the central stalk subunits to proton translocation. Its function is as follows. Component of the F(0) channel, it forms part of the peripheral stalk, linking F(1) to F(0). This Brucella suis (strain ATCC 23445 / NCTC 10510) protein is ATP synthase subunit b 2.